The chain runs to 162 residues: uncharacterized protein (162 aa).

This sequence belongs to the A.longa ORF167/ORF288 family.

It is found in the plastid. This is an uncharacterized protein from Euglena longa (Euglenophycean alga).